We begin with the raw amino-acid sequence, 414 residues long: Carbohydrate sulfotransferase 12 (414 aa).

Over 1-5 (MTKAR) the chain is Cytoplasmic. Residues 6–26 (LFRLWLVLGSVFMILLIIVYW) form a helical; Signal-anchor for type II membrane protein membrane-spanning segment. At 27 to 414 (DSAGAAHFYL…YPKPENLLRD (388 aa)) the chain is on the lumenal side. The tract at residues 80 to 125 (QSDLPRKETEQPPAPGSMEESVRGYDWSPRDARRSPDQGRQQAERR) is disordered. Residues 99–125 (ESVRGYDWSPRDARRSPDQGRQQAERR) show a composition bias toward basic and acidic residues. Residue asparagine 134 is glycosylated (N-linked (GlcNAc...) asparagine). 171–177 (PKVACTN) serves as a coordination point for 3'-phosphoadenylyl sulfate. An N-linked (GlcNAc...) asparagine glycan is attached at asparagine 209. A 3'-phosphoadenylyl sulfate-binding site is contributed by 245 to 253 (RDPFVRLIS). 2 N-linked (GlcNAc...) asparagine glycosylation sites follow: asparagine 280 and asparagine 370.

This sequence belongs to the sulfotransferase 2 family. As to expression, widely expressed. Expressed a high level in spinal chord, heart, spleen, thyroid, pituitary gland, adrenal gland, peripheral blood leukocytes, thymus, lung, small intestine, fetal kidney, fetal spleen and fetal lung.

Its subcellular location is the golgi apparatus membrane. It catalyses the reaction chondroitin beta-D-glucuronate + n 3'-phosphoadenylyl sulfate = chondroitin 4'-sulfate + n adenosine 3',5'-bisphosphate + n H(+). Functionally, catalyzes the transfer of sulfate to position 4 of the N-acetylgalactosamine (GalNAc) residue of chondroitin and desulfated dermatan sulfate. Chondroitin sulfate constitutes the predominant proteoglycan present in cartilage and is distributed on the surfaces of many cells and extracellular matrices. Activity toward partially desulfated dermatan sulfate is however lower. Does not form 4, 6-di-O-sulfated GalNAc when chondroitin sulfate C is used as an acceptor. This is Carbohydrate sulfotransferase 12 (CHST12) from Homo sapiens (Human).